We begin with the raw amino-acid sequence, 573 residues long: Amino-acid permease inda1 (573 aa).

The next 11 membrane-spanning stretches (helical) occupy residues 72 to 92 (MIAI…GALA), 99 to 117 (LFVD…VYAL), 176 to 200 (ITTA…ALGY), 212 to 229 (LAAT…VLGG), 257 to 280 (GFCS…LAAA), 296 to 315 (VFWR…GLLI), 351 to 371 (FMNL…VYGG), 398 to 415 (LPSV…YVSL), 425 to 444 (WLLA…VCLA), 470 to 494 (VYGS…AIAA), and 511 to 527 (YLAA…GWLW).

It belongs to the amino acid-polyamine-organocation (APC) superfamily.

It localises to the membrane. The polypeptide is Amino-acid permease inda1 (inda1) (Hypocrea atroviridis (Trichoderma atroviride)).